The following is a 318-amino-acid chain: Olfactory receptor 51E1 (318 aa).

Residues 1 to 31 (MMVDPNGNESSATYFILIGLPGLEEAQFWLA) are Extracellular-facing. N-linked (GlcNAc...) asparagine glycosylation occurs at Asn-8. The helical transmembrane segment at 32 to 52 (FPLCSLYLIAVLGNLTIIYIV) threads the bilayer. Residues 53-60 (RTEHSLHE) lie on the Cytoplasmic side of the membrane. A helical transmembrane segment spans residues 61-81 (PMYIFLCMLSGIDILISTSSM). Residues 82–100 (PKMLAIFWFNSTTIQFDAC) are Extracellular-facing. The N-linked (GlcNAc...) asparagine glycan is linked to Asn-91. Cys-100 and Cys-182 are disulfide-bonded. The helical transmembrane segment at 101–123 (LLQMFAIHSLSGMESTVLLAMAF) threads the bilayer. Residues 124 to 145 (DRYVAICHPLRHATVLTLPRVT) lie on the Cytoplasmic side of the membrane. Residues 146 to 166 (KIGVAAVVRGAALMAPLPVFI) traverse the membrane as a helical segment. Over 167 to 198 (KQLPFCRSNILSHSYCLHQDVMKLACDDIRVN) the chain is Extracellular. Residues 199 to 219 (VVYGLIVIISAIGLDSLLISF) form a helical membrane-spanning segment. Topologically, residues 220–239 (SYLLILKTVLGLTREAQAKA) are cytoplasmic. Residues 240–260 (FGTCVSHVCAVFIFYVPFIGL) form a helical membrane-spanning segment. Topologically, residues 261–275 (SMVHRFSKRRDSPLP) are extracellular. The chain crosses the membrane as a helical span at residues 276 to 296 (VILANIYLLVPPVLNPIVYGV). Topologically, residues 297 to 318 (KTKEIRQRILRLFHVATHASEP) are cytoplasmic.

Belongs to the G-protein coupled receptor 1 family. As to expression, highly expressed in prostate. Very low levels may be detected in some other tissues, such as placenta, skeletal muscle, heart, ovary and testis. Up-regulated in prostate cancers.

It localises to the cell membrane. Its function is as follows. Odorant receptor. The sequence is that of Olfactory receptor 51E1 (OR51E1) from Homo sapiens (Human).